The sequence spans 243 residues: Anti-sigma-K factor RskA (243 aa).

Residues Met1 to Ala102 are Cytoplasmic-facing. The helical transmembrane segment at Val103–Leu123 threads the bilayer. Topologically, residues Arg124–Thr243 are extracellular. A disordered region spans residues Val223–Thr243.

Belongs to the anti-sigma-K factor family.

It is found in the cell membrane. In terms of biological role, an anti-sigma factor for extracytoplasmic function (ECF) sigma factor SigK. ECF sigma factors are held in an inactive form by an anti-sigma factor until released by regulated intramembrane proteolysis (RIP). RIP occurs when an extracytoplasmic signal triggers a concerted proteolytic cascade to transmit information and elicit cellular responses. The membrane-spanning regulatory substrate protein is first cut extracytoplasmically (site-1 protease, S1P), then within the membrane itself (site-2 protease, S2P, Rip1), while cytoplasmic proteases finish degrading the regulatory protein, liberating the sigma factor. The polypeptide is Anti-sigma-K factor RskA (rskA) (Mycobacterium sp. (strain JLS)).